Here is a 268-residue protein sequence, read N- to C-terminus: Interleukin-2 receptor subunit alpha (268 aa).

A signal peptide spans 1–21; that stretch reads MEPCLLMWGILTFITVSGYTT. Residues 22–81 form the Sushi 1 domain; it reads DLCDDDPPNLKHATFKALTYKTGTVLNCDCERGFRRISSYMHCTGNSSHASWENKCRCKS. Residues 22–237 lie on the Extracellular side of the membrane; sequence DLCDDDPPNL…ESFIFTTEYQ (216 aa). Cystine bridges form between Cys-24–Cys-64, Cys-49–Cys-77, and Cys-51–Cys-79. The N-linked (GlcNAc...) asparagine glycan is linked to Asn-67. Positions 83-112 are disordered; the sequence is SPENRKGKVTTKPEEQKGENPTEMQSQTPP. Basic and acidic residues predominate over residues 85–102; it reads ENRKGKVTTKPEEQKGEN. A Sushi 2 domain is found at 120–183; sequence GHCREPPPWE…WTQPPLKCIS (64 aa). Disulfide bonds link Cys-122-Cys-165 and Cys-149-Cys-181. The segment at 186–213 is disordered; it reads QFPDDEELQASTDAPAGRDTSSPFITTS. A compositionally biased stretch (polar residues) spans 204 to 213; that stretch reads DTSSPFITTS. A helical transmembrane segment spans residues 238–258; that stretch reads IAVASCVLLLISIVLLSGLTW. Topologically, residues 259–268 are cytoplasmic; that stretch reads QRRRRKSRTI.

As to quaternary structure, non-covalent dimer of an alpha and a beta subunit. IL2R exists in 3 different forms: a high affinity dimer, an intermediate affinity monomer (beta subunit), and a low affinity monomer (alpha subunit). The high and intermediate affinity forms also associate with a gamma subunit.

The protein localises to the membrane. Its function is as follows. Receptor for interleukin-2. The receptor is involved in the regulation of immune tolerance by controlling regulatory T cells (TREGs) activity. TREGs suppress the activation and expansion of autoreactive T-cells. The polypeptide is Interleukin-2 receptor subunit alpha (IL2RA) (Canis lupus familiaris (Dog)).